Consider the following 239-residue polypeptide: 2,3,4,5-tetrahydropyridine-2,6-dicarboxylate N-acetyltransferase (239 aa).

This sequence belongs to the transferase hexapeptide repeat family. DapH subfamily.

It carries out the reaction (S)-2,3,4,5-tetrahydrodipicolinate + acetyl-CoA + H2O = L-2-acetamido-6-oxoheptanedioate + CoA. It functions in the pathway amino-acid biosynthesis; L-lysine biosynthesis via DAP pathway; LL-2,6-diaminopimelate from (S)-tetrahydrodipicolinate (acetylase route): step 1/3. Catalyzes the transfer of an acetyl group from acetyl-CoA to tetrahydrodipicolinate. In Staphylococcus aureus (strain MRSA252), this protein is 2,3,4,5-tetrahydropyridine-2,6-dicarboxylate N-acetyltransferase.